A 252-amino-acid polypeptide reads, in one-letter code: Probable transcriptional regulatory protein Moth_1704 (252 aa).

It belongs to the TACO1 family.

Its subcellular location is the cytoplasm. In Moorella thermoacetica (strain ATCC 39073 / JCM 9320), this protein is Probable transcriptional regulatory protein Moth_1704.